Here is a 408-residue protein sequence, read N- to C-terminus: DNA polymerase processivity factor (408 aa).

The Nuclear localization signal motif lies at 344–353; sequence KKRRNLLTKR.

The protein belongs to the herpesviridae DNA polymerase processivity factor family. In terms of assembly, interacts with the DNA polymerase catalytic subunit. Interacts with the origin-binding protein.

The protein resides in the host nucleus. In terms of biological role, plays an essential role in viral DNA replication by acting as the polymerase accessory subunit. Associates with the viral polymerase to increase its processivity and forms high-affinity direct interactions with DNA. Facilitates the origin-binding protein loading onto DNA thus increasing its ability to assemble into a functional complex capable of unwinding duplex DNA. This chain is DNA polymerase processivity factor, found in Varicella-zoster virus (strain Oka vaccine) (HHV-3).